The sequence spans 604 residues: Glutamine--fructose-6-phosphate aminotransferase [isomerizing] (604 aa).

Residue Cys2 is the Nucleophile; for GATase activity of the active site. The Glutamine amidotransferase type-2 domain occupies 2 to 219 (CGIMGAVSER…EGDSACVTTQ (218 aa)). 2 SIS domains span residues 279 to 427 (LRAS…DNRA) and 454 to 594 (LASL…VDQP). Lys599 serves as the catalytic For Fru-6P isomerization activity.

As to quaternary structure, homodimer.

The protein resides in the cytoplasm. It catalyses the reaction D-fructose 6-phosphate + L-glutamine = D-glucosamine 6-phosphate + L-glutamate. Catalyzes the first step in hexosamine metabolism, converting fructose-6P into glucosamine-6P using glutamine as a nitrogen source. The polypeptide is Glutamine--fructose-6-phosphate aminotransferase [isomerizing] (Legionella pneumophila subsp. pneumophila (strain Philadelphia 1 / ATCC 33152 / DSM 7513)).